The chain runs to 307 residues: Bidirectional sugar transporter SWEET11 (307 aa).

Over 1–14 (MAGGFLSMANPAVT) the chain is Extracellular. A helical transmembrane segment spans residues 15 to 35 (LSGVAGNIISFLVFLAPVATF). One can recognise a MtN3/slv 1 domain in the interval 17-100 (GVAGNIISFL…VLYLVYAPRR (84 aa)). Residues 36 to 47 (LQVYKKKSTGGY) are Cytoplasmic-facing. Residues 48-68 (SSVPYVVALFSSVLWIFYALV) traverse the membrane as a helical segment. Topologically, residues 69 to 74 (KTNSRP) are extracellular. Residues 75–95 (LLTINAFGCGVEAAYIVLYLV) form a helical membrane-spanning segment. The Cytoplasmic segment spans residues 96–107 (YAPRRARLRTLA). The helical transmembrane segment at 108–128 (FFLLLDVAAFALIVVTTLYLV) threads the bilayer. At 129 to 135 (PKPHQVK) the chain is on the extracellular side. A helical transmembrane segment spans residues 136–156 (FLGSVCLAFSMAVFVAPLSII). The MtN3/slv 2 domain occupies 136–219 (FLGSVCLAFS…MGLYFWYRKP (84 aa)). Over 157 to 168 (FKVIKTKSVEFM) the chain is Cytoplasmic. A helical transmembrane segment spans residues 169–189 (PIGLSVCLTLSAVAWFCYGLF). The Extracellular portion of the chain corresponds to 190–194 (TKDPY). Residues 195 to 215 (VMYPNVGGFFFSCVQMGLYFW) form a helical membrane-spanning segment. Residues 216 to 307 (YRKPRNTAVL…PEVIEITAAV (92 aa)) are Cytoplasmic-facing.

It belongs to the SWEET sugar transporter family. As to quaternary structure, interacts with COPT1 and COPT2. Interacts with APX8. In terms of tissue distribution, mostly expressed in panicles and anthers. Also detected in leaves (leaf collar, leaf auricle, leaf ligule), roots, sheaths, culms and culm nodes.

The protein resides in the cell membrane. Functionally, mediates both low-affinity uptake and efflux of sugar across the plasma membrane. Required for pollen viability. Involved in the transport of copper, in cooperation with COPT1 and COPT2. In terms of biological role, confers sensitivity to bacterial blight mediated by X.oryzae pv. oryzae (Xoo) in its Xa13 allelic form (e.g. cv. IR24), probably by providing the sugar required for the pathogen growth, or by reducing copper contents in xylem. However, a recessive resistance can be associated with the xa13 allele (in which the promoter is mutated leading to reduced induction upon pathogen infection, e.g. cv. IRBB13), specifically toward Xoo Philippine race 6 and Indian race PXO8. In Oryza sativa subsp. japonica (Rice), this protein is Bidirectional sugar transporter SWEET11 (SWEET11).